Here is a 171-residue protein sequence, read N- to C-terminus: S-ribosylhomocysteine lyase (171 aa).

His-54, His-58, and Cys-128 together coordinate Fe cation.

It belongs to the LuxS family. Homodimer. Fe cation serves as cofactor.

It carries out the reaction S-(5-deoxy-D-ribos-5-yl)-L-homocysteine = (S)-4,5-dihydroxypentane-2,3-dione + L-homocysteine. In terms of biological role, involved in the synthesis of autoinducer 2 (AI-2) which is secreted by bacteria and is used to communicate both the cell density and the metabolic potential of the environment. The regulation of gene expression in response to changes in cell density is called quorum sensing. Catalyzes the transformation of S-ribosylhomocysteine (RHC) to homocysteine (HC) and 4,5-dihydroxy-2,3-pentadione (DPD). In Salmonella typhi, this protein is S-ribosylhomocysteine lyase.